The following is a 203-amino-acid chain: Large ribosomal subunit protein uL22 (203 aa).

Composition is skewed to polar residues over residues 116 to 126 (QNGGESQNQEY) and 134 to 167 (VSKS…DSQL). A disordered region spans residues 116 to 203 (QNGGESQNQE…TVLAQEKEVK (88 aa)). Positions 168–194 (SAKTNSTTTAKKTDLADNNTKNDATNT) are enriched in low complexity.

This sequence belongs to the universal ribosomal protein uL22 family. In terms of assembly, part of the 50S ribosomal subunit.

Functionally, this protein binds specifically to 23S rRNA; its binding is stimulated by other ribosomal proteins, e.g. L4, L17, and L20. It is important during the early stages of 50S assembly. It makes multiple contacts with different domains of the 23S rRNA in the assembled 50S subunit and ribosome. The globular domain of the protein is located near the polypeptide exit tunnel on the outside of the subunit, while an extended beta-hairpin is found that lines the wall of the exit tunnel in the center of the 70S ribosome. The sequence is that of Large ribosomal subunit protein uL22 from Mesomycoplasma hyopneumoniae (strain 232) (Mycoplasma hyopneumoniae).